A 153-amino-acid chain; its full sequence is Cytochrome c-type biogenesis protein CcmE (153 aa).

At 1-8 the chain is on the cytoplasmic side; the sequence is MATRRGRR. A helical; Signal-anchor for type II membrane protein membrane pass occupies residues 9–29; that stretch reads ALLIAGGVGLLALAAALVLNA. Topologically, residues 30–153 are periplasmic; that stretch reads LRSNLVFFFS…PSATLQTEAR (124 aa). Residues His124 and Tyr128 each coordinate heme.

The protein belongs to the CcmE/CycJ family.

The protein resides in the cell inner membrane. Functionally, heme chaperone required for the biogenesis of c-type cytochromes. Transiently binds heme delivered by CcmC and transfers the heme to apo-cytochromes in a process facilitated by CcmF and CcmH. The protein is Cytochrome c-type biogenesis protein CcmE of Bordetella bronchiseptica (strain ATCC BAA-588 / NCTC 13252 / RB50) (Alcaligenes bronchisepticus).